The primary structure comprises 271 residues: tRNA (guanine-N(1)-)-methyltransferase (271 aa).

Residues glycine 120 and 145–150 (IGDYVL) contribute to the S-adenosyl-L-methionine site.

This sequence belongs to the RNA methyltransferase TrmD family. In terms of assembly, homodimer.

It is found in the cytoplasm. The catalysed reaction is guanosine(37) in tRNA + S-adenosyl-L-methionine = N(1)-methylguanosine(37) in tRNA + S-adenosyl-L-homocysteine + H(+). Functionally, specifically methylates guanosine-37 in various tRNAs. This is tRNA (guanine-N(1)-)-methyltransferase from Bifidobacterium longum subsp. infantis (strain ATCC 15697 / DSM 20088 / JCM 1222 / NCTC 11817 / S12).